We begin with the raw amino-acid sequence, 370 residues long: MDVVRTAIGLMSGTSMDGIDVALIRTDGRGFIERGPFLGMPYDAEFRGRLKRALELARPLRDRNERPGELREIEQELTLRHATAVTAFLERFGLAANGVDVLGFHGQTVLHRPDEGLTIQIGDGRELARRTGLSVVYDMRANDMVHGGQGAPLVPAYHAALAGKFQQAGEAVCFVNIGGISNLTYIGADGRIAAFDSGPGNTLIDQWVEMQTGRTYDPGGEIGGRGKVVPALAQRYLDSPFFRGNVRRSLDRGDFAPLRPDEASLEDGARTLAHVAAASIVKSAGFLPERPSAYIVCGGGRLNGTLMAEFSAMAEGSRVLSAEAAGFDGDAMEAEAWAYLAVRSLDGLPLTFPGTTGVAAPVSGGVLATP.

Glycine 13 to aspartate 20 lines the ATP pocket.

This sequence belongs to the anhydro-N-acetylmuramic acid kinase family.

It catalyses the reaction 1,6-anhydro-N-acetyl-beta-muramate + ATP + H2O = N-acetyl-D-muramate 6-phosphate + ADP + H(+). It participates in amino-sugar metabolism; 1,6-anhydro-N-acetylmuramate degradation. It functions in the pathway cell wall biogenesis; peptidoglycan recycling. Its function is as follows. Catalyzes the specific phosphorylation of 1,6-anhydro-N-acetylmuramic acid (anhMurNAc) with the simultaneous cleavage of the 1,6-anhydro ring, generating MurNAc-6-P. Is required for the utilization of anhMurNAc either imported from the medium or derived from its own cell wall murein, and thus plays a role in cell wall recycling. This chain is Anhydro-N-acetylmuramic acid kinase, found in Rhizobium etli (strain ATCC 51251 / DSM 11541 / JCM 21823 / NBRC 15573 / CFN 42).